We begin with the raw amino-acid sequence, 390 residues long: ATP-sensitive inward rectifier potassium channel 11 (390 aa).

At 1–65 (MLSRKGIIPE…LQDVFTTLVD (65 aa)) the chain is on the cytoplasmic side. 2 residues coordinate ATP: Asn48 and Arg50. The helical transmembrane segment at 66–92 (LKWPHTLLIFTMSFLCSWLLFAMVWWL) threads the bilayer. At 93–116 (IAFAHGDLAPGEGTTVPCVTSIHS) the chain is on the extracellular side. Cysteines 110 and 142 form a disulfide. Residues 117 to 133 (FSSAFLFSIEVQVTIGF) constitute an intramembrane region (discontinuously helical; Pore-forming). K(+) contacts are provided by Thr130 and Phe133. Positions 130–135 (TIGFGG) match the Selectivity filter motif. The Extracellular portion of the chain corresponds to 134–142 (GGRMVTEEC). The chain crosses the membrane as a helical span at residues 143-171 (PLAILILIVQNIVGLMINAIMLGCIFMKT). Residues 172 to 390 (SQAHRRAETL…RFSISPDSLS (219 aa)) lie on the Cytoplasmic side of the membrane. Residue Arg176 coordinates a 1,2-diacyl-sn-glycero-3-phospho-(1D-myo-inositol-4,5-bisphosphate). ATP is bound at residue Tyr330. Thr341 is subject to Phosphothreonine; by MAPK1. A Phosphoserine; by MAPK1 modification is found at Ser385.

The protein belongs to the inward rectifier-type potassium channel (TC 1.A.2.1) family. KCNJ11 subfamily. As to quaternary structure, homotetramer; the homotetramer binds four ATP molecules (one ATP per subunit). Forms an heterooctamer with ABCC8/SUR1; one KCNJ11 homotetramer interacts with four ABCC8/SUR1 molecules. Interacts with ABCC9/SUR2. Post-translationally, phosphorylation by MAPK1 results in changes in channel gating that destabilize the closed states and reduce the ATP sensitivity.

The protein resides in the membrane. The catalysed reaction is K(+)(in) = K(+)(out). KATP channels are regulated by cytoplasmic ATP/ADP ratios; ATP inhibits the channel by closing the pore, while ADP activates the channel. Activated by phosphatidylinositol 4,5-biphosphate (PtdIns(4,5)P2). Inward rectifier potassium channel that forms the pore of ATP-sensitive potassium channels (KATP), regulating potassium permeability as a function of cytoplasmic ATP and ADP concentrations in many different cells. Inward rectifier potassium channels are characterized by a greater tendency to allow potassium to flow into the cell rather than out of it. Their voltage dependence is regulated by the concentration of extracellular potassium; as external potassium is raised, the voltage range of the channel opening shifts to more positive voltages. The inward rectification is mainly due to the blockage of outward current by internal magnesium. Can be blocked by extracellular barium. In pancreatic cells, it forms KATP channels with ABCC8/SUR1. Can form cardiac and smooth muscle-type KATP channels with ABCC9. The chain is ATP-sensitive inward rectifier potassium channel 11 (KCNJ11) from Cavia porcellus (Guinea pig).